We begin with the raw amino-acid sequence, 360 residues long: Phenylalanine--tRNA ligase alpha subunit (360 aa).

Position 260 (glutamate 260) interacts with Mg(2+).

This sequence belongs to the class-II aminoacyl-tRNA synthetase family. Phe-tRNA synthetase alpha subunit type 1 subfamily. Tetramer of two alpha and two beta subunits. The cofactor is Mg(2+).

It localises to the cytoplasm. The catalysed reaction is tRNA(Phe) + L-phenylalanine + ATP = L-phenylalanyl-tRNA(Phe) + AMP + diphosphate + H(+). This is Phenylalanine--tRNA ligase alpha subunit from Methylobacterium nodulans (strain LMG 21967 / CNCM I-2342 / ORS 2060).